A 250-amino-acid polypeptide reads, in one-letter code: 3-deoxy-manno-octulosonate cytidylyltransferase (250 aa).

It belongs to the KdsB family.

The protein resides in the cytoplasm. The catalysed reaction is 3-deoxy-alpha-D-manno-oct-2-ulosonate + CTP = CMP-3-deoxy-beta-D-manno-octulosonate + diphosphate. Its pathway is nucleotide-sugar biosynthesis; CMP-3-deoxy-D-manno-octulosonate biosynthesis; CMP-3-deoxy-D-manno-octulosonate from 3-deoxy-D-manno-octulosonate and CTP: step 1/1. The protein operates within bacterial outer membrane biogenesis; lipopolysaccharide biosynthesis. Activates KDO (a required 8-carbon sugar) for incorporation into bacterial lipopolysaccharide in Gram-negative bacteria. The polypeptide is 3-deoxy-manno-octulosonate cytidylyltransferase (Rhodopirellula baltica (strain DSM 10527 / NCIMB 13988 / SH1)).